Consider the following 556-residue polypeptide: Formate--tetrahydrofolate ligase (556 aa).

An ATP-binding site is contributed by 65 to 72 (TPAGEGKS).

It belongs to the formate--tetrahydrofolate ligase family.

The catalysed reaction is (6S)-5,6,7,8-tetrahydrofolate + formate + ATP = (6R)-10-formyltetrahydrofolate + ADP + phosphate. It participates in one-carbon metabolism; tetrahydrofolate interconversion. The protein is Formate--tetrahydrofolate ligase of Streptococcus suis (strain 98HAH33).